We begin with the raw amino-acid sequence, 274 residues long: Indole-3-glycerol phosphate synthase (274 aa).

The protein belongs to the TrpC family.

It carries out the reaction 1-(2-carboxyphenylamino)-1-deoxy-D-ribulose 5-phosphate + H(+) = (1S,2R)-1-C-(indol-3-yl)glycerol 3-phosphate + CO2 + H2O. The protein operates within amino-acid biosynthesis; L-tryptophan biosynthesis; L-tryptophan from chorismate: step 4/5. This chain is Indole-3-glycerol phosphate synthase, found in Kineococcus radiotolerans (strain ATCC BAA-149 / DSM 14245 / SRS30216).